A 435-amino-acid polypeptide reads, in one-letter code: Serine--tRNA ligase (435 aa).

239-241 (TAE) lines the L-serine pocket. 270–272 (RAE) contributes to the ATP binding site. Position 293 (glutamate 293) interacts with L-serine. 357 to 360 (EISS) contributes to the ATP binding site. Serine 393 lines the L-serine pocket.

Belongs to the class-II aminoacyl-tRNA synthetase family. Type-1 seryl-tRNA synthetase subfamily. In terms of assembly, homodimer. The tRNA molecule binds across the dimer.

It is found in the cytoplasm. It catalyses the reaction tRNA(Ser) + L-serine + ATP = L-seryl-tRNA(Ser) + AMP + diphosphate + H(+). It carries out the reaction tRNA(Sec) + L-serine + ATP = L-seryl-tRNA(Sec) + AMP + diphosphate + H(+). Its pathway is aminoacyl-tRNA biosynthesis; selenocysteinyl-tRNA(Sec) biosynthesis; L-seryl-tRNA(Sec) from L-serine and tRNA(Sec): step 1/1. Catalyzes the attachment of serine to tRNA(Ser). Is also able to aminoacylate tRNA(Sec) with serine, to form the misacylated tRNA L-seryl-tRNA(Sec), which will be further converted into selenocysteinyl-tRNA(Sec). The sequence is that of Serine--tRNA ligase from Parvibaculum lavamentivorans (strain DS-1 / DSM 13023 / NCIMB 13966).